Here is a 989-residue protein sequence, read N- to C-terminus: Presequence protease, mitochondrial (989 aa).

The transit peptide at 1–16 directs the protein to the mitochondrion; that stretch reads MLRFQRFASSYAQAQA. Histidine 84 provides a ligand contact to Zn(2+). Residue glutamate 87 is the Proton acceptor of the active site. A Zn(2+)-binding site is contributed by histidine 88. The active site involves glutamate 160. Glutamate 185 is a binding site for Zn(2+). At serine 920 the chain carries Phosphoserine. An ATP-binding site is contributed by 972–979; it reads GPGIEGKT.

This sequence belongs to the peptidase M16 family. PreP subfamily. Monomer and homodimer; homodimerization is induced by binding of the substrate. Requires Zn(2+) as cofactor.

The protein resides in the mitochondrion intermembrane space. The protein localises to the mitochondrion matrix. With respect to regulation, activated by nucleotides, including ATP, GTP, CTP, UTP, and ADP. Activated by copper, manganese, calcium and magnesium ions; copper and manganese restore activity following inactivation by EDTA (ethylenediaminetetraacetic acid). Inhibited by metal chelators including EDTA, EGTA (ethylene glycol bis(2-aminoethyl)tetraacetic acid), and 1,10-phenanthroline. Inhibited by copper, zinc, and iron ions. Also inhibited by dithiothreitol p-mercuribenzenesulfonic acid, N-ethylmaleimide, protoporphyrin, hemin, protamine and triarginine. Functionally, degrades mitochondrial transit peptides after their cleavage in the intermembrane space or in the matrix, and presequence peptides; clearance of these peptides is required to keep the presequence processing machinery running. Preferentially cleaves the N-terminal side of paired basic amino acid residues. Also degrades other unstructured peptides. May function as an ATP-dependent peptidase as opposed to a metalloendopeptidase. In Saccharomyces cerevisiae (strain ATCC 204508 / S288c) (Baker's yeast), this protein is Presequence protease, mitochondrial.